The primary structure comprises 238 residues: Ribonuclease PH (238 aa).

Residues Arg86 and 124-126 (GTR) contribute to the phosphate site.

This sequence belongs to the RNase PH family. As to quaternary structure, homohexameric ring arranged as a trimer of dimers.

It catalyses the reaction tRNA(n+1) + phosphate = tRNA(n) + a ribonucleoside 5'-diphosphate. Phosphorolytic 3'-5' exoribonuclease that plays an important role in tRNA 3'-end maturation. Removes nucleotide residues following the 3'-CCA terminus of tRNAs; can also add nucleotides to the ends of RNA molecules by using nucleoside diphosphates as substrates, but this may not be physiologically important. Probably plays a role in initiation of 16S rRNA degradation (leading to ribosome degradation) during starvation. This Parvibaculum lavamentivorans (strain DS-1 / DSM 13023 / NCIMB 13966) protein is Ribonuclease PH.